We begin with the raw amino-acid sequence, 677 residues long: Opioid growth factor receptor (677 aa).

Position 1 is an N-acetylmethionine (methionine 1). Over residues 1–29 (MDDPDCDSTWEEDEEDAEDAEDEDCEDGE) the composition is skewed to acidic residues. Positions 1–63 (MDDPDCDSTW…SSFQSRMTGS (63 aa)) are disordered. Polar residues predominate over residues 54-63 (SSFQSRMTGS). The Bipartite nuclear localization signal motif lies at 267-283 (RRQLVHFAWEHFRPRCK). The interval 295-407 (FKPSSLPHPL…EPGPQSASEV (113 aa)) is disordered. Residues serine 299 and serine 315 each carry the phosphoserine modification. Basic and acidic residues-rich tracts occupy residues 305 to 323 (EGSR…DHEA) and 331 to 345 (GPEH…DEGP). 6 positions are modified to phosphoserine: serine 349, serine 361, serine 378, serine 382, serine 403, and serine 420. The segment covering 361 to 395 (SQGDEAGGHGEDRPEPLSPKESKKRKLELSRREQP) has biased composition (basic and acidic residues). Positions 421-431 (QGSLRTGTQEV) are enriched in polar residues. The segment at 421–677 (QGSLRTGTQE…VESSAKSGKP (257 aa)) is disordered. Positions 466-476 (GDSAAVASGGA) are enriched in low complexity. Serine 484 is subject to Phosphoserine. A run of 7 repeats spans residues 517-536 (SPSE…EPAE), 537-556 (SPSE…EPAE), 557-576 (SPSE…EPAE), 577-596 (SPSE…EPAE), 597-616 (SPSE…EPAE), 617-636 (SPSE…EPAE), and 637-656 (SPSE…EPAK). A 7 X 20 AA approximate tandem repeats of [ST]-P-S-E-T-P-G-P-[SR]-P-A-G-P-[AT]-[GR]-D-E-P-A-[EK] region spans residues 517 to 656 (SPSETPGPSP…AGPTRDEPAK (140 aa)). Low complexity predominate over residues 528–538 (GPAGDEPAESP). A phosphoserine mark is found at serine 537 and serine 557. Phosphoserine occurs at positions 617 and 637.

This sequence belongs to the opioid growth factor receptor family. Highly expressed in the heart and liver, moderately in skeletal muscle and kidney and to a lesser extent in brain and pancreas. Expressed in fetal tissues including liver and kidney.

The protein resides in the cytoplasm. It is found in the nucleus. Its function is as follows. Receptor for opioid growth factor (OGF), also known as Met-enkephalin. Seems to be involved in growth regulation. The polypeptide is Opioid growth factor receptor (OGFR) (Homo sapiens (Human)).